Consider the following 199-residue polypeptide: N-(5'-phosphoribosyl)anthranilate isomerase (199 aa).

Belongs to the TrpF family.

It carries out the reaction N-(5-phospho-beta-D-ribosyl)anthranilate = 1-(2-carboxyphenylamino)-1-deoxy-D-ribulose 5-phosphate. It functions in the pathway amino-acid biosynthesis; L-tryptophan biosynthesis; L-tryptophan from chorismate: step 3/5. The sequence is that of N-(5'-phosphoribosyl)anthranilate isomerase from Sulfolobus acidocaldarius (strain ATCC 33909 / DSM 639 / JCM 8929 / NBRC 15157 / NCIMB 11770).